The following is a 233-amino-acid chain: Ion-translocating oxidoreductase complex subunit E (233 aa).

6 consecutive transmembrane segments (helical) span residues 18 to 38 (ALVQLLGLCPLLAVSSTATNA), 39 to 59 (LGLGLATTLVLVCTNTAVSAL), 69 to 89 (IPIYVMIIASVVSTVQMLINA), 92 to 112 (FGLYQSLGIFIPLIVTNCIVI), 128 to 148 (ALDGFAMGMGATCALFVLGAL), and 182 to 202 (PFLLAMLPPGAFIGLGLLLAG).

It belongs to the NqrDE/RnfAE family. The complex is composed of six subunits: RnfA, RnfB, RnfC, RnfD, RnfE and RnfG.

It localises to the cell inner membrane. Functionally, part of a membrane-bound complex that couples electron transfer with translocation of ions across the membrane. The protein is Ion-translocating oxidoreductase complex subunit E of Yersinia pseudotuberculosis serotype O:3 (strain YPIII).